The following is a 199-amino-acid chain: Hematopoietic prostaglandin D synthase (199 aa).

In terms of domain architecture, GST N-terminal spans 2 to 79 (PNYKLLYFNM…YLTKNTDLAG (78 aa)). Residues Tyr-8, Arg-14, Trp-39, 49–51 (GKI), and 63–64 (QS) each bind glutathione. Residues 81 to 199 (TELEQCQVDA…WILKRPQTKL (119 aa)) form the GST C-terminal domain.

This sequence belongs to the GST superfamily. Sigma family. Homodimer. Glutathione serves as cofactor. In terms of tissue distribution, highly expressed in spleen and bone marrow. Lower levels of expression in small intestine, colon, liver, pancreas and skin. Not detected in brain, heart, lung or kidney (at protein level).

The protein resides in the cytoplasm. It catalyses the reaction prostaglandin H2 = prostaglandin D2. The enzyme catalyses RX + glutathione = an S-substituted glutathione + a halide anion + H(+). The catalysed reaction is 2-glyceryl-prostaglandin H2 = 2-glyceryl-prostaglandin D2. Its function is as follows. Bifunctional enzyme which catalyzes both the conversion of PGH2 to PGD2, a prostaglandin involved in smooth muscle contraction/relaxation and a potent inhibitor of platelet aggregation, and the conjugation of glutathione with a wide range of aryl halides and organic isothiocyanates. Also exhibits low glutathione-peroxidase activity towards cumene hydroperoxide. In Rattus norvegicus (Rat), this protein is Hematopoietic prostaglandin D synthase.